The primary structure comprises 259 residues: Thiazole synthase (259 aa).

Lysine 100 acts as the Schiff-base intermediate with DXP in catalysis. 1-deoxy-D-xylulose 5-phosphate-binding positions include glycine 161, 187-188, and 209-210; these read AG and NT.

The protein belongs to the ThiG family. As to quaternary structure, homotetramer. Forms heterodimers with either ThiH or ThiS.

It localises to the cytoplasm. The enzyme catalyses [ThiS sulfur-carrier protein]-C-terminal-Gly-aminoethanethioate + 2-iminoacetate + 1-deoxy-D-xylulose 5-phosphate = [ThiS sulfur-carrier protein]-C-terminal Gly-Gly + 2-[(2R,5Z)-2-carboxy-4-methylthiazol-5(2H)-ylidene]ethyl phosphate + 2 H2O + H(+). Its pathway is cofactor biosynthesis; thiamine diphosphate biosynthesis. In terms of biological role, catalyzes the rearrangement of 1-deoxy-D-xylulose 5-phosphate (DXP) to produce the thiazole phosphate moiety of thiamine. Sulfur is provided by the thiocarboxylate moiety of the carrier protein ThiS. In vitro, sulfur can be provided by H(2)S. The polypeptide is Thiazole synthase (Halalkalibacterium halodurans (strain ATCC BAA-125 / DSM 18197 / FERM 7344 / JCM 9153 / C-125) (Bacillus halodurans)).